Reading from the N-terminus, the 621-residue chain is Kininogen-1 (621 aa).

An N-terminal signal peptide occupies residues 1-18; the sequence is MKLITILFLCSRLLPSLT. A Cystatin kininogen-type 1 domain is found at 27–131; that stretch reads CNDQDVFKAV…IQTCLITPAE (105 aa). 9 cysteine pairs are disulfide-bonded: C27-C591, C82-C93, C106-C125, C141-C144, C205-C217, C228-C247, C263-C266, C327-C339, and C350-C369. Residues N47 and N87 are each glycosylated (N-linked (GlcNAc...) asparagine). A glycan (O-linked (GalNAc...) threonine; partial) is linked at T136. The region spanning 150–253 is the Cystatin kininogen-type 2 domain; sequence TKSPDLEPVL…SQKCDLYPVK (104 aa). N-linked (GlcNAc...) asparagine glycans are attached at residues N168 and N169. Residue N197 is glycosylated (N-linked (GlcNAc...) asparagine; partial). N-linked (GlcNAc...) asparagine glycosylation is present at N204. The Cystatin kininogen-type 3 domain maps to 272–375; that stretch reads VDSPDLEEPL…TVNCQPLGQT (104 aa). Position 331 is a phosphoserine (S331). The segment at 396–497 is disordered; the sequence is EGSTTVSLPH…GKNNGKHYDW (102 aa). The O-linked (GalNAc...) serine glycan is linked to S398. O-linked (GalNAc...) threonine glycosylation is found at T399 and T400. An O-linked (GalNAc...) serine glycan is attached at S406. A compositionally biased stretch (basic residues) spans 444 to 492; that stretch reads GHKHKHDQGHGHHGSHGLGHGHQKQHGLGHGHKHGHGHGKHKNKGKNNG. Residue S512 is glycosylated (O-linked (GalNAc...) serine). Residues T520, T524, T536, T548, T553, and T570 are each glycosylated (O-linked (GalNAc...) threonine). An O-linked (GalNAc...) serine glycan is attached at S581.

In terms of processing, bradykinin is released from kininogen by plasma kallikrein. Post-translationally, phosphorylated by FAM20C in the extracellular medium. Bradykinin is inactivated by ACE, which removes the dipeptide Arg-Phe from its C-terminus. In terms of tissue distribution, plasma.

The protein localises to the secreted. The protein resides in the extracellular space. Kininogens are inhibitors of thiol proteases. HMW-kininogen plays an important role in blood coagulation by helping to position optimally prekallikrein and factor XI next to factor XII; HMW-kininogen inhibits the thrombin- and plasmin-induced aggregation of thrombocytes. LMW-kininogen inhibits the aggregation of thrombocytes. LMW-kininogen is in contrast to HMW-kininogen not involved in blood clotting. In terms of biological role, the active peptide bradykinin is a potent vasodilatator that is released from HMW-kininogen shows a variety of physiological effects: (A) influence in smooth muscle contraction, (B) induction of hypotension, (C) natriuresis and diuresis, (D) decrease in blood glucose level, (E) it is a mediator of inflammation and causes (E1) increase in vascular permeability, (E2) stimulation of nociceptors (4E3) release of other mediators of inflammation (e.g. prostaglandins), (F) it has a cardioprotective effect (directly via bradykinin action, indirectly via endothelium-derived relaxing factor action). The protein is Kininogen-1 (KNG1) of Bos taurus (Bovine).